We begin with the raw amino-acid sequence, 98 residues long: uncharacterized protein (98 aa).

This sequence belongs to the Rv1128c/1148c/1588c/1702c/1945/3466 family.

This is an uncharacterized protein from Mycobacterium tuberculosis (strain ATCC 25618 / H37Rv).